The chain runs to 318 residues: Aspartate carbamoyltransferase catalytic subunit (318 aa).

2 residues coordinate carbamoyl phosphate: arginine 67 and threonine 68. L-aspartate is bound at residue lysine 95. Residues arginine 117, histidine 145, and glutamine 148 each coordinate carbamoyl phosphate. L-aspartate-binding residues include arginine 178 and arginine 236. The carbamoyl phosphate site is built by glycine 277 and proline 278.

This sequence belongs to the aspartate/ornithine carbamoyltransferase superfamily. ATCase family. As to quaternary structure, heterododecamer (2C3:3R2) of six catalytic PyrB chains organized as two trimers (C3), and six regulatory PyrI chains organized as three dimers (R2).

It carries out the reaction carbamoyl phosphate + L-aspartate = N-carbamoyl-L-aspartate + phosphate + H(+). Its pathway is pyrimidine metabolism; UMP biosynthesis via de novo pathway; (S)-dihydroorotate from bicarbonate: step 2/3. Catalyzes the condensation of carbamoyl phosphate and aspartate to form carbamoyl aspartate and inorganic phosphate, the committed step in the de novo pyrimidine nucleotide biosynthesis pathway. The sequence is that of Aspartate carbamoyltransferase catalytic subunit from Roseiflexus castenholzii (strain DSM 13941 / HLO8).